The following is a 483-amino-acid chain: Low-density lipoprotein receptor-related protein 11 (483 aa).

The first 32 residues, 1–32 (MATRGGGPGPGFRHRALRGLLLLCLWLPGSRP), serve as a signal peptide directing secretion. At 33-433 (GEPAAPSSGV…GGEHPAPEAG (401 aa)) the chain is on the extracellular side. The region spanning 85-172 (AVPDTIIRTQ…FAPLRGYRTY (88 aa)) is the MANSC domain. N152 and N275 each carry an N-linked (GlcNAc...) asparagine glycan. Residues 193–287 (PVSKAGKDVV…VTVLPRPYST (95 aa)) form the PKD domain. Positions 293–329 (ACSRYHFFCDSGCCIDIALACDGVRQCPDGSDEDFCQ) constitute an LDL-receptor class A domain. 3 disulfides stabilise this stretch: C294–C306, C301–C319, and C313–C328. A disordered region spans residues 346-428 (AQPGAMGLNE…KSGQAGGEHP (83 aa)). Composition is skewed to polar residues over residues 367–376 (RATTHNQPAT) and 385–407 (HSTQ…SSGK). N-linked (GlcNAc...) asparagine glycosylation occurs at N403. Over residues 408 to 418 (NQEEGNYDLKS) the composition is skewed to basic and acidic residues. The helical transmembrane segment at 434–456 (AVLPLALGLAITVLLLLMVTCRL) threads the bilayer. Topologically, residues 457–483 (RLVKQKLKKARPITSEESDYLINGMYL) are cytoplasmic. Position 474 is a phosphoserine (S474).

This sequence belongs to the LDLR family.

The protein localises to the membrane. This Mus musculus (Mouse) protein is Low-density lipoprotein receptor-related protein 11 (Lrp11).